A 632-amino-acid chain; its full sequence is MTNQQMPSGHSLERQPLSLLCLAALGVVYGDIGTSPLYVMKTVFDPIHGLAVTESNVIGIISLIFWTIMIVVSLKYVTLILRADNHGEGGIMALLSLASSSVTDRPRLHNILFLIGAFGAALFFGDGVITPAISVLSAVEGLEVATPLLQPYVLPITVVVLIALFMLQQRGTGGIGALFGPVMVIWFVSLGLVGLINIAGAPQIVAAFNPMYAFAFCISNGWLAFIALGAVVLAVTGGEALYADMGHFGAKPIRLAWYGGVLPALTLNYLGQGALLLANPAAISNPFFLLFPSWALYGAVGLATAATVIASQSVISGVFSVTRQAIQLGFLPRMQIRHTSERKIGQIYIPFVNWTLLSVVLMAVLGFGSSSNLASAYGVAVTTTMVIETTLTFFVLRYVWNYPFLLGILVTAFFLAIDSAFFSATILKVAQGGWFPLVIGSVIFFIMITWSRGRQMLVDHLRSVAIPLQSFLESLIAHPPTRVAGTSVFLTANPDGVPHALLHNLAHNQVLHERVVFLTVTYQETPWVPVEQRISIKPLMENCYQITVRYGFKDEANLPYALELCEPHGLVFEPLRTSYFLSREIVVPSPGTGMSLWRERLFAAMVRNASNAAEYFKLPANRVLELGARVEI.

Transmembrane regions (helical) follow at residues 19–39, 57–77, 111–131, 147–167, 175–195, 213–233, 257–277, 286–306, 347–367, 376–396, 404–424, and 429–449; these read LLCL…PLYV, VIGI…LKYV, ILFL…VITP, PLLQ…LFML, IGAL…LVGL, AFAF…AVVL, WYGG…ALLL, PFFL…ATAA, IYIP…VLGF, AYGV…FFVL, FLLG…FFSA, and VAQG…IMIT.

This sequence belongs to the HAK/KUP transporter (TC 2.A.72) family.

The protein resides in the cell inner membrane. The catalysed reaction is K(+)(in) + H(+)(in) = K(+)(out) + H(+)(out). Its function is as follows. Transport of potassium into the cell. Likely operates as a K(+):H(+) symporter. In Nitrosospira multiformis (strain ATCC 25196 / NCIMB 11849 / C 71), this protein is Probable potassium transport system protein Kup.